The sequence spans 700 residues: Protein kinase C, eye isozyme (700 aa).

2 Phorbol-ester/DAG-type zinc fingers span residues 71 to 121 and 136 to 186; these read GHRF…VFKC and KHGW…PPMC. Residues 189 to 310 form the C2 domain; sequence DISEVRGKLL…LQKEPVDGWY (122 aa). Ca(2+) contacts are provided by D222, D228, D281, D283, S286, and D289. Residues 371–629 form the Protein kinase domain; the sequence is FNFVKVIGKG…RQEITTHPFF (259 aa). Residues 377–385 and K400 contribute to the ATP site; that span reads IGKGSFGKV. Catalysis depends on D495, which acts as the Proton acceptor. The AGC-kinase C-terminal domain occupies 630-700; that stretch reads RNVDWDKAEA…FMNPEFITII (71 aa).

Belongs to the protein kinase superfamily. AGC Ser/Thr protein kinase family. PKC subfamily. It depends on Ca(2+) as a cofactor. In terms of tissue distribution, exclusively expressed in photoreceptor cells.

It carries out the reaction L-seryl-[protein] + ATP = O-phospho-L-seryl-[protein] + ADP + H(+). The enzyme catalyses L-threonyl-[protein] + ATP = O-phospho-L-threonyl-[protein] + ADP + H(+). Functionally, this is a calcium-activated, phospholipid-dependent, serine- and threonine-specific enzyme. This isozyme is a negative regulator of the visual transduction cascade and has been shown to be required for photoreceptor cell inactivation and light adaptation. Negative regulation is dependent on interaction with scaffolding protein inaD. Acts in a hh-signaling pathway which regulates the Duox-dependent gut immune response to bacterial uracil; required for the activation of Cad99C and consequently Cad99C-dependent endosome formation, which is essential for the Duox-dependent production of reactive oxygen species (ROS) in response to intestinal bacterial infection. This Drosophila melanogaster (Fruit fly) protein is Protein kinase C, eye isozyme (inaC).